The following is a 90-amino-acid chain: Small ribosomal subunit protein uS15c (90 aa).

This sequence belongs to the universal ribosomal protein uS15 family. Part of the 30S ribosomal subunit.

It is found in the plastid. It localises to the chloroplast. This is Small ribosomal subunit protein uS15c (rps15) from Panax ginseng (Korean ginseng).